The primary structure comprises 491 residues: Chromosomal replication initiator protein DnaA (491 aa).

The tract at residues 1 to 69 (MTTWDKCLKK…TIQECHGNDL (69 aa)) is domain I, interacts with DnaA modulators. A domain II region spans residues 69–154 (LIIEYSNKKF…KEDEEYSFGL (86 aa)). Residues 155–371 (PLKEKYVFDS…GALNRVLTTS (217 aa)) form a domain III, AAA+ region region. 4 residues coordinate ATP: Gly-199, Gly-201, Lys-202, and Thr-203. The segment at 372-491 (KFNHKDPTIE…YELLLDKISR (120 aa)) is domain IV, binds dsDNA.

This sequence belongs to the DnaA family. Oligomerizes as a right-handed, spiral filament on DNA at oriC.

The protein localises to the cytoplasm. Its function is as follows. Plays an essential role in the initiation and regulation of chromosomal replication. ATP-DnaA binds to the origin of replication (oriC) to initiate formation of the DNA replication initiation complex once per cell cycle. Binds the DnaA box (a 9 base pair repeat at the origin) and separates the double-stranded (ds)DNA. Forms a right-handed helical filament on oriC DNA; dsDNA binds to the exterior of the filament while single-stranded (ss)DNA is stabiized in the filament's interior. The ATP-DnaA-oriC complex binds and stabilizes one strand of the AT-rich DNA unwinding element (DUE), permitting loading of DNA polymerase. After initiation quickly degrades to an ADP-DnaA complex that is not apt for DNA replication. Binds acidic phospholipids. This is Chromosomal replication initiator protein DnaA from Francisella tularensis subsp. holarctica (strain LVS).